A 473-amino-acid chain; its full sequence is Photosystem II CP43 reaction center protein (473 aa).

The propeptide occupies 1–14; it reads MKTLYSLRRFYPVE. An N-acetylthreonine modification is found at T15. A Phosphothreonine modification is found at T15. A run of 5 helical transmembrane segments spans residues 69-93, 134-155, 178-200, 255-275, and 291-312; these read LFEV…PHLA, LLGP…KDRN, KALY…RKIT, KPFA…LSYS, and WFNN…ASQA. E367 provides a ligand contact to [CaMn4O5] cluster. A helical membrane pass occupies residues 447–471; the sequence is RARAAAAGFEKGIDRDFEPVLSMTP.

The protein belongs to the PsbB/PsbC family. PsbC subfamily. As to quaternary structure, PSII is composed of 1 copy each of membrane proteins PsbA, PsbB, PsbC, PsbD, PsbE, PsbF, PsbH, PsbI, PsbJ, PsbK, PsbL, PsbM, PsbT, PsbX, PsbY, PsbZ, Psb30/Ycf12, at least 3 peripheral proteins of the oxygen-evolving complex and a large number of cofactors. It forms dimeric complexes. Binds multiple chlorophylls and provides some of the ligands for the Ca-4Mn-5O cluster of the oxygen-evolving complex. It may also provide a ligand for a Cl- that is required for oxygen evolution. PSII binds additional chlorophylls, carotenoids and specific lipids. is required as a cofactor.

Its subcellular location is the plastid. It is found in the chloroplast thylakoid membrane. Functionally, one of the components of the core complex of photosystem II (PSII). It binds chlorophyll and helps catalyze the primary light-induced photochemical processes of PSII. PSII is a light-driven water:plastoquinone oxidoreductase, using light energy to abstract electrons from H(2)O, generating O(2) and a proton gradient subsequently used for ATP formation. This Panax ginseng (Korean ginseng) protein is Photosystem II CP43 reaction center protein.